Here is a 364-residue protein sequence, read N- to C-terminus: Nuclear hormone receptor family member nhr-53 (364 aa).

Positions 20–95 (PSYCLICCEV…VGMQRSSVQQ (76 aa)) form a DNA-binding region, nuclear receptor. NR C4-type zinc fingers lie at residues 23–43 (CLIC…CRAC) and 59–83 (CPKN…YEKC). Positions 110–363 (REEPVLDTMR…KNLYDMFSPT (254 aa)) constitute an NR LBD domain.

This sequence belongs to the nuclear hormone receptor family.

The protein localises to the nucleus. Functionally, orphan nuclear receptor. This is Nuclear hormone receptor family member nhr-53 (nhr-53) from Caenorhabditis elegans.